Reading from the N-terminus, the 147-residue chain is Calcium-regulated heat stable protein 1 (147 aa).

Residues 1–12 (MSSEPPPPPQPP) show a composition bias toward pro residues. The segment at 1–49 (MSSEPPPPPQPPTHQTSIGLLDTPRARDRSPSPLRGNVVPSPLPTRRTR) is disordered. Ser-2 bears the N-acetylserine mark. Ser-30, Ser-32, and Ser-41 each carry phosphoserine. At Thr-45 the chain carries Phosphothreonine. 2 positions are modified to phosphoserine: Ser-52 and Ser-58. The 68-residue stretch at 62 to 129 (VYKGVCKCFC…KLQAVEVVIT (68 aa)) folds into the CSD domain. A phosphoserine mark is found at Ser-146 and Ser-147.

Homodimer. Interacts with STYX. Post-translationally, can be phosphorylated by DYRK2 (in vitro). Dephosphorylated by calcineurin in a Ca(2+) dependent manner, and probably by PP2A or PP4 serine phosphatases in cAMP- and PKC-mediated pathways. As to expression, widely expressed.

It localises to the cytoplasm. The protein resides in the P-body. The protein localises to the cytoplasmic granule. Its function is as follows. Binds mRNA and regulates the stability of target mRNA. The polypeptide is Calcium-regulated heat stable protein 1 (Carhsp1) (Rattus norvegicus (Rat)).